The chain runs to 180 residues: MASSIVSSAAVATRGNGAQASMVAPFTGLKSTASFPVSRKQNLDITSIASNGGRVSCMQVWPPINMKKYETLSYLPDLSDEQLLSEIEYLLKNGWVPCLEFETEHGFVYRENHKSPGYYDGRYWTMWKLPMFGCTDATQVLAEVQEAKKAYPQAWVRIIGFDNVRQVQCISFIAYKPEGY.

The N-terminal 56 residues, 1–56 (MASSIVSSAAVATRGNGAQASMVAPFTGLKSTASFPVSRKQNLDITSIASNGGRVS), are a transit peptide targeting the chloroplast.

It belongs to the RuBisCO small chain family. As to quaternary structure, heterohexadecamer of 8 large and 8 small subunits. In terms of assembly, (Microbial infection) Binds to tobamovirus movement protein; this interaction seems required for viral systemic movement.

It is found in the plastid. The protein resides in the chloroplast. The protein localises to the cell junction. It localises to the plasmodesma. Functionally, ruBisCO catalyzes two reactions: the carboxylation of D-ribulose 1,5-bisphosphate, the primary event in carbon dioxide fixation, as well as the oxidative fragmentation of the pentose substrate. Both reactions occur simultaneously and in competition at the same active site. Although the small subunit is not catalytic it is essential for maximal activity. Involved in antiviral defenses. This chain is Ribulose bisphosphate carboxylase small subunit, chloroplastic 4, found in Solanum lycopersicum (Tomato).